A 289-amino-acid polypeptide reads, in one-letter code: ATP synthase gamma chain (289 aa).

Belongs to the ATPase gamma chain family. F-type ATPases have 2 components, CF(1) - the catalytic core - and CF(0) - the membrane proton channel. CF(1) has five subunits: alpha(3), beta(3), gamma(1), delta(1), epsilon(1). CF(0) has three main subunits: a, b and c.

The protein resides in the cell inner membrane. In terms of biological role, produces ATP from ADP in the presence of a proton gradient across the membrane. The gamma chain is believed to be important in regulating ATPase activity and the flow of protons through the CF(0) complex. This Haemophilus influenzae (strain 86-028NP) protein is ATP synthase gamma chain.